The chain runs to 693 residues: Nuclear autoantigenic sperm protein (693 aa).

The disordered stretch occupies residues 25 to 415 (GVHVEEEEGE…ENKSLPENEE (391 aa)). A histone-binding region spans residues 29–40 (EEEEGEKTEEES). Acidic residues predominate over residues 29 to 53 (EEEEGEKTEEESLVENNDNVDEEAR). At Thr36 the chain carries Phosphothreonine. The residue at position 40 (Ser40) is a Phosphoserine. 2 stretches are compositionally biased toward basic and acidic residues: residues 54–74 (EELR…KKTE) and 82–99 (ETAK…REDM). Thr83 carries the post-translational modification Phosphothreonine. Phosphoserine occurs at positions 89 and 102. The histone-binding stretch occupies residues 124–157 (EEAEGAAAPEGLNEAEVTSGKSEQEAADAEKGKS). The span at 128-139 (GAAAPEGLNEAE) shows a compositional bias: low complexity. Positions 145–156 (SEQEAADAEKGK) are enriched in basic and acidic residues. Residue Lys156 is modified to N6-acetyllysine. Ser157 carries the post-translational modification Phosphoserine. Residues 164 to 187 (QEEHKEQVEEKQGEVIVRIEKPTE) are compositionally biased toward basic and acidic residues. An N6-acetyllysine modification is found at Lys199. Ser232, Ser304, Ser315, Ser327, and Ser356 each carry phosphoserine. The segment covering 307-322 (RVTETKGGSELEEVRA) has biased composition (basic and acidic residues). Thr369 and Thr382 each carry phosphothreonine. The histone-binding stretch occupies residues 374 to 418 (EQMKEGEETEGSEEEDKENDKAEEETPNDSVLENKSLPENEEEEI). A compositionally biased stretch (acidic residues) spans 380-400 (EETEGSEEEDKENDKAEEETP). Ser385, Ser403, and Ser409 each carry phosphoserine. 2 TPR repeats span residues 448–481 (AQAH…QEQY) and 490–523 (AETH…IEKR). Residues 510-565 (VAQFSKSIEVIEKRMAVLNEQMKEAEGSSTEYEKEIEELKELLPEIREKIEDAKES) adopt a coiled-coil conformation. Ser568 is modified (phosphoserine). Positions 583–693 (SSTSGFTPSG…AGATVESTAC (111 aa)) are disordered. Position 589 is a phosphothreonine (Thr589). Residues Ser611 and Ser612 each carry the phosphoserine modification. A Nuclear localization signal motif is present at residues 622–628 (VRKKRKP). Basic and acidic residues predominate over residues 627–645 (KPEEESPRKDDAKKAKQEP). Residue Ser632 is modified to Phosphoserine. Lys642 is covalently cross-linked (Glycyl lysine isopeptide (Lys-Gly) (interchain with G-Cter in SUMO1)). A phosphoserine mark is found at Ser651, Ser657, and Ser662.

The protein belongs to the NASP family. In terms of assembly, binds to linker H1 histones. Interacts with histones H2A, H2B, H3 and H4. Interacts with histone H3.3. Interacts with histones H3 and H4; NASP is a histone chaperone that stabilizes and maintains a soluble pool of histone H3-H4 dimers. Interacts with ASF1A and ASF1B; the interaction is probably indirect and mediated by H3-H4. Also binds to HSP90 in the cytoplasm. This interaction stimulates binding of NASP to H1-6/H1T. Testis- and sperm-specific.

It localises to the cytoplasm. It is found in the nucleus. Component of the histone chaperone network. Binds and stabilizes histone H3-H4 not bound to chromatin to maintain a soluble reservoir and modulate degradation by chaperone-mediated autophagy. Required for DNA replication, normal cell cycle progression and cell proliferation. Forms a cytoplasmic complex with HSP90 and H1 linker histones and stimulates HSP90 ATPase activity. NASP and H1 histone are subsequently released from the complex and translocate to the nucleus where the histone is released for binding to DNA. The protein is Nuclear autoantigenic sperm protein (NASP) of Oryctolagus cuniculus (Rabbit).